We begin with the raw amino-acid sequence, 98 residues long: UPF0251 protein Sputw3181_3483 (98 aa).

This sequence belongs to the UPF0251 family.

The chain is UPF0251 protein Sputw3181_3483 from Shewanella sp. (strain W3-18-1).